Consider the following 313-residue polypeptide: Aspartate carbamoyltransferase catalytic subunit (313 aa).

Positions 51 and 52 each coordinate carbamoyl phosphate. Position 80 (K80) interacts with L-aspartate. R101, H129, and Q132 together coordinate carbamoyl phosphate. Residues R162 and R224 each coordinate L-aspartate. Residues L263 and P264 each coordinate carbamoyl phosphate.

The protein belongs to the aspartate/ornithine carbamoyltransferase superfamily. ATCase family. Heterododecamer (2C3:3R2) of six catalytic PyrB chains organized as two trimers (C3), and six regulatory PyrI chains organized as three dimers (R2).

The catalysed reaction is carbamoyl phosphate + L-aspartate = N-carbamoyl-L-aspartate + phosphate + H(+). The protein operates within pyrimidine metabolism; UMP biosynthesis via de novo pathway; (S)-dihydroorotate from bicarbonate: step 2/3. Catalyzes the condensation of carbamoyl phosphate and aspartate to form carbamoyl aspartate and inorganic phosphate, the committed step in the de novo pyrimidine nucleotide biosynthesis pathway. The polypeptide is Aspartate carbamoyltransferase catalytic subunit (Phocaeicola vulgatus (strain ATCC 8482 / DSM 1447 / JCM 5826 / CCUG 4940 / NBRC 14291 / NCTC 11154) (Bacteroides vulgatus)).